The chain runs to 468 residues: Putative chitinase 1 (468 aa).

The N-terminal stretch at 1–21 (MDFYSSLLPFLILIYLEFCSG) is a signal peptide. The GH18 domain maps to 22-381 (FNRVCYYNGW…MSIIHGLGEY (360 aa)). Cysteines 26 and 51 form a disulfide. Chitin-binding positions include 73-74 (VF) and 100-103 (GGWD). Glu143 (proton donor) is an active-site residue. Chitin-binding positions include Tyr144, 213-216 (KMYD), and Trp353. A coiled-coil region spans residues 386–440 (SDTLEAEREMINKKIRKAAREISYYSDKGNSTMAKKMEDKLNQLKDHLSAVQAHQ).

The protein belongs to the glycosyl hydrolase 18 family. In terms of tissue distribution, prismatic layer of shell (at protein level). Expressed primarily in the mantle with highest level in the outer epithelium of the mantle edge and lower level in the mantle pallium.

The protein resides in the secreted. The catalysed reaction is Random endo-hydrolysis of N-acetyl-beta-D-glucosaminide (1-&gt;4)-beta-linkages in chitin and chitodextrins.. The sequence is that of Putative chitinase 1 from Margaritifera margaritifera (Freshwater pearl mussel).